We begin with the raw amino-acid sequence, 75 residues long: DNA-directed RNA polymerase subunit omega (75 aa).

Belongs to the RNA polymerase subunit omega family. In terms of assembly, in cyanobacteria the RNAP catalytic core is composed of 2 alpha, 1 beta, 1 beta', 1 gamma and 1 omega subunit. When a sigma factor is associated with the core the holoenzyme is formed, which can initiate transcription.

It carries out the reaction RNA(n) + a ribonucleoside 5'-triphosphate = RNA(n+1) + diphosphate. Functionally, promotes RNA polymerase assembly. Latches the N- and C-terminal regions of the beta' subunit thereby facilitating its interaction with the beta and alpha subunits. This is DNA-directed RNA polymerase subunit omega from Synechococcus sp. (strain WH7803).